A 60-amino-acid polypeptide reads, in one-letter code: Cytotoxin 4 (60 aa).

4 disulfides stabilise this stretch: Cys3–Cys21, Cys14–Cys38, Cys42–Cys53, and Cys54–Cys59.

Belongs to the three-finger toxin family. Short-chain subfamily. Type IA cytotoxin sub-subfamily. As to quaternary structure, monomer in solution; Homodimer and oligomer in the presence of negatively charged lipids forming a pore with a size ranging between 20 and 30 Angstroms. Expressed by the venom gland.

The protein resides in the secreted. It localises to the target cell membrane. Its function is as follows. Shows cytolytic activity on many different cells by forming pore in lipid membranes. In vivo, increases heart rate or kills the animal by cardiac arrest. In addition, it binds to heparin with high affinity, interacts with Kv channel-interacting protein 1 (KCNIP1) in a calcium-independent manner, and binds to integrin alpha-V/beta-3 (ITGAV/ITGB3) with moderate affinity. This chain is Cytotoxin 4, found in Naja annulifera (Banded Egyptian cobra).